The chain runs to 551 residues: Solute carrier family 22 member 6 (551 aa).

At 1–9 (MAFNDLLKQ) the chain is on the cytoplasmic side. Residues 10–30 (VGGVGRFQLIQVTMVVAPLLL) form a helical membrane-spanning segment. Residues 31 to 135 (MASHNTLQNF…LVCSHRAFRQ (105 aa)) are Extracellular-facing. N-linked (GlcNAc...) asparagine glycosylation is found at asparagine 39, asparagine 56, asparagine 92, and asparagine 113. Residues 136–156 (LAQSLYMVGVLLGAMVFGYLA) form a helical membrane-spanning segment. At 157–164 (DRLGRRKV) the chain is on the cytoplasmic side. The chain crosses the membrane as a helical span at residues 165 to 187 (LILNYLQTAVSGTCAAYAPNYTV). Over 188–195 (YCVFRLLS) the chain is Extracellular. The chain crosses the membrane as a helical span at residues 196–216 (GMSLASIAINCMTLNVEWMPI). Over 217 to 224 (HTRAYVGT) the chain is Cytoplasmic. The chain crosses the membrane as a helical span at residues 225–245 (LIGYVYSLGQFLLAGIAYAVP). Residues 246-248 (HWR) are Extracellular-facing. Residues 249–269 (HLQLVVSVPFFIAFIYSWFFI) traverse the membrane as a helical segment. The Cytoplasmic segment spans residues 270 to 337 (ESARWYSSSG…ELLRCPTLRH (68 aa)). A helical membrane pass occupies residues 338-358 (LFLCLSMLWFATSFAYYGLVM). Over 359–368 (DLQGFGVSMY) the chain is Extracellular. A helical membrane pass occupies residues 369 to 389 (LIQVIFGAVDLPAKFVCFLVI). Topologically, residues 390 to 395 (NSMGRR) are cytoplasmic. A helical membrane pass occupies residues 396 to 416 (PAQMASLLLAGICILVNGIIP). Residues 417-425 (KSHTIIRTS) lie on the Extracellular side of the membrane. Residues 426–446 (LAVLGKGCLASSFNCIFLYTG) form a helical membrane-spanning segment. At 447-484 (ELYPTVIRQTGLGMGSTMARVGSIVSPLVSMTAEFYPS) the chain is on the cytoplasmic side. Residues 485–505 (MPLFIFGAVPVVASAVTALLP) traverse the membrane as a helical segment. Residues 506–551 (ETLGQPLPDTVQDLKSRSRGKQNQQQQEQQKQMMPLQASTQEKNGL) lie on the Extracellular side of the membrane. The disordered stretch occupies residues 514 to 551 (DTVQDLKSRSRGKQNQQQQEQQKQMMPLQASTQEKNGL). A compositionally biased stretch (low complexity) spans 526–537 (KQNQQQQEQQKQ). Positions 542-551 (QASTQEKNGL) are enriched in polar residues.

This sequence belongs to the major facilitator (TC 2.A.1) superfamily. Organic cation transporter (TC 2.A.1.19) family. Post-translationally, glycosylated. Glycosylation is necessary for proper targeting of the transporter to the plasma membrane. As to expression, highly expressed in kidney; in the particular segment of the proximal tubule. In kidney, found preferentially in the cortex and outer medulla and weakly in the inner medulla. Expressed to a lower extent in brain.

Its subcellular location is the cell membrane. It is found in the basolateral cell membrane. It localises to the basal cell membrane. The enzyme catalyses (6R)-L-erythro-5,6,7,8-tetrahydrobiopterin(out) + a dicarboxylate(in) = (6R)-L-erythro-5,6,7,8-tetrahydrobiopterin(in) + a dicarboxylate(out). The catalysed reaction is L-erythro-7,8-dihydrobiopterin(out) + a dicarboxylate(in) = L-erythro-7,8-dihydrobiopterin(in) + a dicarboxylate(out). It catalyses the reaction L-sepiapterin(out) + a dicarboxylate(in) = L-sepiapterin(in) + a dicarboxylate(out). It carries out the reaction prostaglandin F2alpha(out) + a dicarboxylate(in) = prostaglandin F2alpha(in) + a dicarboxylate(out). The enzyme catalyses prostaglandin E2(out) + a dicarboxylate(in) = prostaglandin E2(in) + a dicarboxylate(out). The catalysed reaction is 3',5'-cyclic AMP(out) + a dicarboxylate(in) = 3',5'-cyclic AMP(in) + a dicarboxylate(out). It catalyses the reaction 3',5'-cyclic GMP(out) + a dicarboxylate(in) = 3',5'-cyclic GMP(in) + a dicarboxylate(out). It carries out the reaction urate(out) + a dicarboxylate(in) = urate(in) + a dicarboxylate(out). The enzyme catalyses kynurenate(out) + glutarate(in) = kynurenate(in) + glutarate(out). The catalysed reaction is (indol-3-yl)acetate(out) + a dicarboxylate(in) = (indol-3-yl)acetate(in) + a dicarboxylate(out). It catalyses the reaction indoxyl sulfate(out) + a dicarboxylate(in) = indoxyl sulfate(in) + a dicarboxylate(out). It carries out the reaction N-benzoylglycine(out) + a dicarboxylate(in) = N-benzoylglycine(in) + a dicarboxylate(out). The enzyme catalyses 3-carboxy-4-methyl-5-propyl-2-furanpropanoate(out) + a dicarboxylate(in) = 3-carboxy-4-methyl-5-propyl-2-furanpropanoate(in) + a dicarboxylate(out). In terms of biological role, secondary active transporter that functions as a Na(+)-independent organic anion (OA)/dicarboxylate antiporter where the uptake of one molecule of OA into the cell is coupled with an efflux of one molecule of intracellular dicarboxylate such as alpha-ketoglutarate or glutarate. Mediates the uptake of OA across the basolateral side of proximal tubule epithelial cells, thereby contributing to the renal elimination of endogenous OA from the systemic circulation into the urine. Function as a biopterin transporters involved in the uptake and the secretion of coenzymes tetrahydrobiopterin (BH4) dihydrobiopterin (BH2) and sepiapterin to urine, thereby determining baseline levels of blood biopterins. Transports prostaglandin E2 (PGE2) and prostaglandin F2-alpha (PGF2-alpha) and may contribute to their renal excretion. Also mediates the uptake of cyclic nucleotides such as cAMP and cGMP. Involved in the transport of neuroactive tryptophan metabolites kynurenate (KYNA) and xanthurenate (XA) and may contribute to their secretion from the brain. May transport glutamate. Also involved in the disposition of uremic toxins and potentially toxic xenobiotics by the renal organic anion secretory pathway, helping reduce their undesired toxicological effects on the body. Uremic toxins include the indoxyl sulfate (IS), hippurate, indole acetate (IA), 3-carboxy-4- methyl-5-propyl-2-furanpropionate(CMPF) and urate. Xenobiotics include the mycotoxin ochratoxin (OTA). May also contribute to the transport of organic compounds in testes across the blood-testis-barrier. May also work as a bidirectional OA/dicarboxylate exchanger. The sequence is that of Solute carrier family 22 member 6 from Rattus norvegicus (Rat).